The following is a 411-amino-acid chain: Fructose-1,6-bisphosphatase, chloroplastic (411 aa).

The transit peptide at 1–53 (MAATAGATPSSHLLLSSSRHVAASPQPRILFPSLSGKRVAVGKNHHATGVRCM) directs the protein to the chloroplast. Mg(2+)-binding residues include glutamate 133, glutamate 162, aspartate 183, leucine 185, and aspartate 186. 186–189 (DGSS) provides a ligand contact to substrate. Residues cysteine 227 and cysteine 232 are joined by a disulfide bond. Asparagine 291, tyrosine 323, tyrosine 341, tyrosine 343, and lysine 353 together coordinate substrate. A Mg(2+)-binding site is contributed by glutamate 359.

Belongs to the FBPase class 1 family. In terms of assembly, homotetramer. The cofactor is Mg(2+).

It is found in the plastid. The protein resides in the chloroplast stroma. The catalysed reaction is beta-D-fructose 1,6-bisphosphate + H2O = beta-D-fructose 6-phosphate + phosphate. It participates in carbohydrate biosynthesis; Calvin cycle. The polypeptide is Fructose-1,6-bisphosphatase, chloroplastic (FBP) (Brassica napus (Rape)).